A 907-amino-acid chain; its full sequence is Alanine--tRNA ligase (907 aa).

4 residues coordinate Zn(2+): histidine 581, histidine 585, cysteine 683, and histidine 687.

It belongs to the class-II aminoacyl-tRNA synthetase family. Zn(2+) serves as cofactor.

The protein localises to the cytoplasm. It carries out the reaction tRNA(Ala) + L-alanine + ATP = L-alanyl-tRNA(Ala) + AMP + diphosphate. Catalyzes the attachment of alanine to tRNA(Ala) in a two-step reaction: alanine is first activated by ATP to form Ala-AMP and then transferred to the acceptor end of tRNA(Ala). Also edits incorrectly charged Ser-tRNA(Ala) and Gly-tRNA(Ala) via its editing domain. The chain is Alanine--tRNA ligase from Bdellovibrio bacteriovorus (strain ATCC 15356 / DSM 50701 / NCIMB 9529 / HD100).